The following is a 220-amino-acid chain: ATP synthase subunit beta, chloroplastic (220 aa).

It belongs to the ATPase alpha/beta chains family. In terms of assembly, F-type ATPases have 2 components, CF(1) - the catalytic core - and CF(0) - the membrane proton channel. CF(1) has five subunits: alpha(3), beta(3), gamma(1), delta(1), epsilon(1). CF(0) has four main subunits: a(1), b(1), b'(1) and c(9-12).

It localises to the plastid. It is found in the chloroplast thylakoid membrane. The catalysed reaction is ATP + H2O + 4 H(+)(in) = ADP + phosphate + 5 H(+)(out). Functionally, produces ATP from ADP in the presence of a proton gradient across the membrane. The catalytic sites are hosted primarily by the beta subunits. This chain is ATP synthase subunit beta, chloroplastic (atpB), found in Osmundastrum cinnamomeum (Cinnamon fern).